The primary structure comprises 1363 residues: Vascular endothelial growth factor receptor 3 (1363 aa).

An N-terminal signal peptide occupies residues 1–24 (MQPGAALNRRLWLCLGLLQGLANG). Topologically, residues 25–775 (YSMTPPTLNI…EGSEDKGSME (751 aa)) are extracellular. Residues Asn33, Asn104, Asn166, Asn251, Asn299, and Asn411 are each glycosylated (N-linked (GlcNAc...) asparagine). Ig-like C2-type domains follow at residues 44–118 (GDSL…YIKA), 151–213 (KDSM…WGDQ), 230–326 (YDIQ…TEVI), 331–415 (PFIS…ISLE), 422–552 (PHIH…FYVT), 555–671 (PDGF…KYLS), and 678–764 (PRLT…ASVA). 2 cysteine pairs are disulfide-bonded: Cys51–Cys111 and Cys158–Cys206. Cysteines 252 and 310 form a disulfide. 3 disulfide bridges follow: Cys445–Cys534, Cys466–Cys486, and Cys578–Cys653. N-linked (GlcNAc...) asparagine glycosylation is found at Asn515, Asn527, Asn582, Asn594, and Asn683. Residues Cys699 and Cys751 are joined by a disulfide bond. A glycan (N-linked (GlcNAc...) asparagine) is linked at Asn758. A helical transmembrane segment spans residues 776–796 (IVILIGTGVIAVFFWVLLLLI). Residues 797 to 1363 (FCNMKRPAHA…GSTFFADSNY (567 aa)) lie on the Cytoplasmic side of the membrane. 2 positions are modified to phosphotyrosine; by SRC: Tyr830 and Tyr833. Positions 845 to 1173 (LHLGRVLGHG…DLVEILGDLL (329 aa)) constitute a Protein kinase domain. Residues 851–859 (LGHGAFGKV) and Lys879 contribute to the ATP site. The active-site Proton acceptor is Asp1037. The residue at position 1063 (Tyr1063) is a Phosphotyrosine; by autocatalysis and SRC. 4 positions are modified to phosphotyrosine; by autocatalysis: Tyr1068, Tyr1230, Tyr1231, and Tyr1265. Residues 1289–1317 (SRHRQEGSFSRKDPGQHMDISRGHPDLQG) show a composition bias toward basic and acidic residues. The interval 1289–1330 (SRHRQEGSFSRKDPGQHMDISRGHPDLQGRRRRPTQGAQGGK) is disordered. Residues Tyr1333 and Tyr1337 each carry the phosphotyrosine; by autocatalysis and SRC modification. At Tyr1363 the chain carries Phosphotyrosine; by autocatalysis.

The protein belongs to the protein kinase superfamily. Tyr protein kinase family. CSF-1/PDGF receptor subfamily. As to quaternary structure, interacts with VEGFC and VEGFD. Monomer in the absence of bound VEGFC or VEGFD. Homodimer in the presence of bound VEGFC or VEGFD. Can also form a heterodimer with KDR. Interacts with PTPN14; the interaction is enhanced by stimulation with VEGFC. Interacts with CRK, GRB2, PTK2/FAK1, SHC1, PIK3R1 and PTPN11/SHP-2. Identified in a complex with SRC and ITGB1. Identified in a complex with SRC and ITGB1. Post-translationally, autophosphorylated on tyrosine residues upon ligand binding. Autophosphorylation occurs in trans, i.e. one subunit of the dimeric receptor phosphorylates tyrosine residues on the other subunit. Phosphorylation in response to H(2)O(2) is mediated by a process that requires SRC and PRKCD activity. Phosphorylation at Tyr-1068 is required for autophosphorylation at additional tyrosine residues. Phosphorylation at Tyr-1063 and Tyr-1337 is important for interaction with CRK and subsequent activation of MAPK8. Phosphorylation at Tyr-1230, Tyr-1231 and Tyr-1337 is important for interaction with GRB2 and subsequent activation of the AKT1 and MAPK1/ERK2 and/or MAPK3/ERK1 signaling pathways. In response to endothelial cell adhesion onto collagen, can also be phosphorylated in the absence of FLT4 kinase activity by SRC.

The protein localises to the cell membrane. It is found in the cytoplasm. The protein resides in the nucleus. The enzyme catalyses L-tyrosyl-[protein] + ATP = O-phospho-L-tyrosyl-[protein] + ADP + H(+). Its activity is regulated as follows. Present in an inactive conformation in the absence of bound ligand. Binding of VEGFC or VEGFD leads to dimerization and activation by autophosphorylation on tyrosine residues. Its function is as follows. Tyrosine-protein kinase that acts as a cell-surface receptor for VEGFC and VEGFD, and plays an essential role in adult lymphangiogenesis and in the development of the vascular network and the cardiovascular system during embryonic development. Promotes proliferation, survival and migration of endothelial cells, and regulates angiogenic sprouting. Signaling by activated FLT4 leads to enhanced production of VEGFC, and to a lesser degree VEGFA, thereby creating a positive feedback loop that enhances FLT4 signaling. Modulates KDR signaling by forming heterodimers. Mediates activation of the MAPK1/ERK2, MAPK3/ERK1 signaling pathway, of MAPK8 and the JUN signaling pathway, and of the AKT1 signaling pathway. Phosphorylates SHC1. Mediates phosphorylation of PIK3R1, the regulatory subunit of phosphatidylinositol 3-kinase. Promotes phosphorylation of MAPK8 at 'Thr-183' and 'Tyr-185', and of AKT1 at 'Ser-473'. The chain is Vascular endothelial growth factor receptor 3 (Flt4) from Rattus norvegicus (Rat).